A 5634-amino-acid polypeptide reads, in one-letter code: Hemicentin-1 (5634 aa).

The signal sequence occupies residues 1-21 (MIAQEVVHTVFLVALFRSSLA). In terms of domain architecture, VWFA spans 41 to 216 (TLAFVFDVTG…EVLKWVEEAV (176 aa)). Ig-like C2-type domains lie at 431–517 (PKVT…FDVS), 520–607 (PPII…VFLT), 612–697 (PKVT…STLR), 702–788 (PKLV…LTLD), 793–883 (PVFI…TTVT), 890–976 (PLIG…TSVA), 981–1067 (PSIQ…VQLT), 1072–1166 (PRVF…VKLS), 1171–1254 (PKIQ…AEVT), 1261–1353 (PSVE…YNLK), 1357–1446 (PPVI…FSVN), 1451–1540 (PSIL…IKLT), 1545–1633 (PSIK…FHVD), 1638–1723 (PTIE…REIK), 1732–1820 (PAVE…FEVT), 1825–1913 (PTIK…TQLH), 1918–2006 (PSLD…YSLQ), 2011–2096 (PSIS…RDID), 2103–2189 (PNIM…YNVN), 2194–2284 (PSIY…YNLQ), 2289–2378 (PSIT…YDLS), 2383–2472 (PSII…FGLS), 2477–2565 (PHIV…FRLN), 2570–2661 (PTIA…YEVK), 2665–2762 (PPII…VNIQ), 2765–2863 (PSFQ…YDVH), 2867–2958 (PPVI…FNLN), 2962–3050 (PPSV…VSLT), and 3055–3145 (PSIK…FHLN). Disulfide bonds link Cys451–Cys499 and Cys541–Cys591. Thr615 carries O-linked (GalNAc...) threonine glycosylation. 11 cysteine pairs are disulfide-bonded: Cys633/Cys681, Cys723/Cys772, Cys814/Cys867, Cys911/Cys960, Cys1002/Cys1051, Cys1101/Cys1150, Cys1192/Cys1240, Cys1287/Cys1337, Cys1381/Cys1430, Cys1474/Cys1524, and Cys1568/Cys1617. Thr1292 and Thr1386 each carry an O-linked (GalNAc...) threonine glycan. Residue Thr1639 is glycosylated (O-linked (GalNAc...) threonine). Cystine bridges form between Cys1662–Cys1711 and Cys1755–Cys1804. Thr1826 is a glycosylation site (O-linked (GalNAc...) threonine). Intrachain disulfides connect Cys1847/Cys1897, Cys1941/Cys1990, Cys2032/Cys2082, Cys2124/Cys2173, Cys2217/Cys2268, Cys2313/Cys2362, Cys2407/Cys2456, Cys2500/Cys2549, Cys2596/Cys2645, Cys2695/Cys2744, Cys2798/Cys2847, Cys2893/Cys2942, Cys2985/Cys3034, and Cys3080/Cys3129. A glycan (O-linked (GalNAc...) threonine) is linked at Thr3151. Ig-like C2-type domains are found at residues 3155–3227 (PETE…VASN), 3244–3334 (PSVA…FNLN), 3339–3428 (PKIR…YSLQ), 3433–3515 (PNMD…GEVS), 3526–3614 (PHIN…YLVR), 3619–3707 (PNIA…FNLT), 3712–3798 (PSIG…IDLQ), 3803–3891 (PSIA…VDLT), 3896–3982 (PTIA…VTLR), 3987–4073 (PVIQ…VKLN), 4077–4163 (PPVI…STLT), 4168–4252 (PRIQ…RIVT), 4259–4332 (PTFT…AENS), 4347–4434 (PPVF…MSLT), and 4439–4526 (PIIT…VIVQ). Disulfide bonds link Cys3172–Cys3223, Cys3267–Cys3318, Cys3363–Cys3412, Cys3456–Cys3505, Cys3549–Cys3598, Cys3642–Cys3691, Cys3733–Cys3782, and Cys3824–Cys3875. A glycan (O-linked (GalNAc...) threonine) is linked at Thr3897. 25 disulfides stabilise this stretch: Cys3917-Cys3966, Cys4008-Cys4057, Cys4099-Cys4147, Cys4189-Cys4238, Cys4280-Cys4327, Cys4370-Cys4418, Cys4460-Cys4508, Cys4540-Cys4577, Cys4544-Cys4582, Cys4555-Cys4567, Cys4597-Cys4634, Cys4601-Cys4639, Cys4612-Cys4624, Cys4654-Cys4691, Cys4658-Cys4696, Cys4669-Cys4681, Cys4711-Cys4748, Cys4715-Cys4753, Cys4726-Cys4738, Cys4768-Cys4805, Cys4772-Cys4810, Cys4783-Cys4795, Cys4825-Cys4862, Cys4829-Cys4867, and Cys4840-Cys4852. Thr4379 carries O-linked (GalNAc...) threonine glycosylation. TSP type-1 domains are found at residues 4528-4583 (HGGF…KLCP), 4585-4640 (DGHW…RPCP), 4642-4697 (HGVW…RHCP), 4699-4754 (DGRW…DPCP), 4756-4811 (HGNW…DMCP), and 4813-4868 (DGSW…QACP). The Nidogen G2 beta-barrel domain occupies 4870–5092 (GPQRARGSVI…SKGDRSNQCP (223 aa)). Residues 5106–5145 (DEDECTAGNPCSHTCHNAIGAYYCSCPKGLTIAADGRTCQ) enclose the EGF-like 1; calcium-binding domain. 3 disulfide bridges follow: Cys5110-Cys5120, Cys5116-Cys5129, and Cys5131-Cys5144. One can recognise an EGF-like 2; calcium-binding domain in the interval 5146–5189 (DIDECALGGHTCRAGQDCDNTIGSYRCVVHCGTGFRRTSDGLSC). The EGF-like 3; calcium-binding domain maps to 5191-5228 (DINECQESSPCHQRCFNVIGSFHCGCEAGYQLKGRKCI). Cystine bridges form between Cys5195/Cys5205, Cys5201/Cys5214, and Cys5216/Cys5227. The region spanning 5229 to 5269 (DVNECRQNVCRPDQHCKNTRGGYKCIDLCPSGMTKAENGTC) is the EGF-like 4; calcium-binding domain. The 36-residue stretch at 5271-5306 (DIDECKDGTHQCRYNQICENTRGSYRCACPRGYRSQ) folds into the EGF-like 5; calcium-binding domain. 8 disulfide bridges follow: Cys5275/Cys5288, Cys5282/Cys5297, Cys5318/Cys5329, Cys5325/Cys5338, Cys5340/Cys5353, Cys5435/Cys5445, Cys5441/Cys5454, and Cys5456/Cys5469. Residues 5314–5354 (DINECEQVPKPCAHQCSNSPGSFKCICLPGQQLLGDGKSCA) enclose the EGF-like 6; calcium-binding domain. Residues 5431–5470 (DIDECQNRDTCQHECKNTIGSYQCVCPPGYRLMLNGKTCQ) form the EGF-like 7; calcium-binding domain.

In terms of tissue distribution, in the kidney, expressed in the glomerulus (at protein level). Expressed in whisker and hair follicles, eye, tongue, and splenic and lymph node conduits (at protein level). In the embryo, localizes to the cleavage furrow at the two-cell stage (at protein level). In neonatal skin, expressed throughout the dermis (at protein level). In adult skin, strongly concentrated at the dermal side of the basement membrane but not detectable in the deeper dermis. Shows tendon-specific localization at the myotendinous junction and is also detected in the perichondrium (at protein level). Expressed by chondrocytes residing in articular cartilage and the femoral growth plate of 52 week old mice (at protein level). Expressed in vascular endothelial cells in coronary arteries and sparsely in endocardial endothelium (at protein level). Expressed in skin, tongue, lung and eye. At 14.5 dpc, expressed in the vibrissae, dermis, forelimb, kidney, intestine, lung and iliac cartilage where expression is found mainly in mesenchymal cells.

Its subcellular location is the secreted. The protein localises to the extracellular space. It is found in the extracellular matrix. It localises to the basement membrane. The protein resides in the cytoplasm. Its subcellular location is the cell junction. The protein localises to the cleavage furrow. In terms of biological role, involved in transforming growth factor beta-mediated rearrangement of the podocyte cytoskeleton which includes reduction of F-actin fibers and broadening, flattening and elongation of podocytes. Plays a role in basement membrane organization. May promote cleavage furrow maturation during cytokinesis in preimplantation embryos. May play a role in the architecture of adhesive and flexible epithelial cell junctions. May play a role during myocardial remodeling by imparting an effect on cardiac fibroblast migration. This chain is Hemicentin-1, found in Mus musculus (Mouse).